A 284-amino-acid chain; its full sequence is tRNA (guanine-N(7)-)-methyltransferase (284 aa).

Residues G102, 125–126 (EI), 160–161 (NT), and C180 contribute to the S-adenosyl-L-methionine site. Residue D183 is part of the active site. S-adenosyl-L-methionine is bound at residue 258 to 260 (TEE).

It belongs to the class I-like SAM-binding methyltransferase superfamily. TrmB family. Forms a complex with TRM82.

Its subcellular location is the nucleus. The enzyme catalyses guanosine(46) in tRNA + S-adenosyl-L-methionine = N(7)-methylguanosine(46) in tRNA + S-adenosyl-L-homocysteine. It functions in the pathway tRNA modification; N(7)-methylguanine-tRNA biosynthesis. Its function is as follows. Catalyzes the formation of N(7)-methylguanine at position 46 (m7G46) in tRNA. The chain is tRNA (guanine-N(7)-)-methyltransferase from Podospora anserina (strain S / ATCC MYA-4624 / DSM 980 / FGSC 10383) (Pleurage anserina).